The primary structure comprises 121 residues: Acid shock protein (121 aa).

The first 21 residues, 1 to 21 (MKKVLALMVAATLGLSSVAFA), serve as a signal peptide directing secretion. The propeptide occupies 22–63 (ADTTATATPAATSTTATVAAQTKATQHQKHKVTKKTTEQKAQ). The interval 40 to 121 (AAQTKATQHQ…AKKPVAAPAA (82 aa)) is disordered. Residues 84–93 (AAKKHVKKAS) are compositionally biased toward basic residues. Residues 94-103 (VQKAPVQKAQ) show a composition bias toward low complexity. A compositionally biased stretch (basic residues) spans 104-113 (AAKKHHKTAK).

The protein belongs to the Asr family. Post-translationally, proteolytic processing gives rise to the active protein.

Its subcellular location is the periplasm. Its function is as follows. Required for growth and/or survival at acidic conditions. This Yersinia pestis bv. Antiqua (strain Antiqua) protein is Acid shock protein.